A 263-amino-acid polypeptide reads, in one-letter code: Dihydromethanophenazine:CoB--CoM heterodisulfide reductase subunit E (263 aa).

Helical transmembrane passes span 18 to 38 (TFVQ…YGLI), 108 to 128 (VMHL…GMMF), 150 to 170 (FLSI…LVAL), 184 to 204 (IMYD…GFIA), and 221 to 241 (VAPP…IAFI).

This sequence belongs to the HdrE family. The dihydromethanophenazine:CoB--CoM heterodisulfide reductase is composed of two subunits; HdrD and HdrE. Heme b is required as a cofactor.

The protein localises to the cell membrane. It catalyses the reaction methanophenazine + coenzyme B + coenzyme M = dihydromethanophenazine + coenzyme M-coenzyme B heterodisulfide. It participates in cofactor metabolism; coenzyme M-coenzyme B heterodisulfide reduction; coenzyme B and coenzyme M from coenzyme M-coenzyme B heterodisulfide: step 1/1. Part of a complex that catalyzes the reversible reduction of CoM-S-S-CoB to the thiol-coenzymes H-S-CoM (coenzyme M) and H-S-CoB (coenzyme B). HdrE may be responsible for anchoring the complex to the membrane. In Methanosarcina barkeri (strain Fusaro / DSM 804), this protein is Dihydromethanophenazine:CoB--CoM heterodisulfide reductase subunit E (hdrE).